The sequence spans 335 residues: Methionyl-tRNA formyltransferase (335 aa).

S122–P125 provides a ligand contact to (6S)-5,6,7,8-tetrahydrofolate. The interval D203–R222 is disordered.

It belongs to the Fmt family.

It catalyses the reaction L-methionyl-tRNA(fMet) + (6R)-10-formyltetrahydrofolate = N-formyl-L-methionyl-tRNA(fMet) + (6S)-5,6,7,8-tetrahydrofolate + H(+). Its function is as follows. Attaches a formyl group to the free amino group of methionyl-tRNA(fMet). The formyl group appears to play a dual role in the initiator identity of N-formylmethionyl-tRNA by promoting its recognition by IF2 and preventing the misappropriation of this tRNA by the elongation apparatus. The sequence is that of Methionyl-tRNA formyltransferase from Rhodopirellula baltica (strain DSM 10527 / NCIMB 13988 / SH1).